A 493-amino-acid chain; its full sequence is MTTVRTRIAPSPTGDPHVGTAYIALFNLCFARQHGGQFILRIEDTDQLRSTRESEQQIYDALRWLGIEWDEGPDVGGPHGPYRQSERGEIYKKYSDELVAKGHAFPCFCSAERLDQVRAEQMANKETPRYDGHCMHLDPAEAERRITAGESHVIRMKVPSEGVCQVQDMLRGTVEIGWDRMDMQVLMKADGLPTYFLANVVDDHLMGITHVLRGEEWLPSAPKLIKLYEYFGWEQPQLCYMPLLRNPDKSKLSKRKNPTSVTFYERMGFLPQAMLNYLGRMGWSMPDEREKFTLEEMIEHFDIQRVSLGGPIFDLEKLSWLNGQWLRELPVEQFAAEVRKWAFNPEYMMKIAPHVQQRVETFSQIAPLAGFFFSGPLQLDPALFAHKKLDATQVRQVMQLILWKLEALRQWEKERITACITQVAEHLGFKLRDVMPLMFAAITGQASSVSVLDAMEILGPDLTRFRLRNALELLGGASKKEAKEWEKLLASLG.

The 'HIGH' region motif lies at 10–20 (PSPTGDPHVGT). Cys107, Cys109, Cys134, and His136 together coordinate Zn(2+). The 'KMSKS' region signature appears at 251–255 (KLSKR). Residue Lys254 participates in ATP binding.

The protein belongs to the class-I aminoacyl-tRNA synthetase family. Glutamate--tRNA ligase type 1 subfamily. In terms of assembly, monomer. Requires Zn(2+) as cofactor.

It is found in the cytoplasm. It carries out the reaction tRNA(Glu) + L-glutamate + ATP = L-glutamyl-tRNA(Glu) + AMP + diphosphate. Catalyzes the attachment of glutamate to tRNA(Glu) in a two-step reaction: glutamate is first activated by ATP to form Glu-AMP and then transferred to the acceptor end of tRNA(Glu). This chain is Glutamate--tRNA ligase, found in Stutzerimonas stutzeri (strain A1501) (Pseudomonas stutzeri).